A 127-amino-acid polypeptide reads, in one-letter code: Holo-[acyl-carrier-protein] synthase (127 aa).

Mg(2+) contacts are provided by aspartate 8 and glutamate 60.

It belongs to the P-Pant transferase superfamily. AcpS family. Requires Mg(2+) as cofactor.

It is found in the cytoplasm. It carries out the reaction apo-[ACP] + CoA = holo-[ACP] + adenosine 3',5'-bisphosphate + H(+). Its function is as follows. Transfers the 4'-phosphopantetheine moiety from coenzyme A to a Ser of acyl-carrier-protein. In Marinomonas sp. (strain MWYL1), this protein is Holo-[acyl-carrier-protein] synthase.